Here is a 428-residue protein sequence, read N- to C-terminus: Glutamate-1-semialdehyde 2,1-aminomutase 1 (428 aa).

K267 bears the N6-(pyridoxal phosphate)lysine mark.

This sequence belongs to the class-III pyridoxal-phosphate-dependent aminotransferase family. HemL subfamily. As to quaternary structure, homodimer. Requires pyridoxal 5'-phosphate as cofactor.

The protein resides in the cytoplasm. It catalyses the reaction (S)-4-amino-5-oxopentanoate = 5-aminolevulinate. It functions in the pathway porphyrin-containing compound metabolism; protoporphyrin-IX biosynthesis; 5-aminolevulinate from L-glutamyl-tRNA(Glu): step 2/2. The chain is Glutamate-1-semialdehyde 2,1-aminomutase 1 (hemL1) from Staphylococcus aureus (strain NCTC 8325 / PS 47).